The sequence spans 38 residues: Mu-agatoxin-Hc1b (38 aa).

Disulfide bonds link Cys-3/Cys-19, Cys-10/Cys-24, Cys-18/Cys-34, and Cys-26/Cys-32. The residue at position 38 (Ser-38) is a Serine amide.

Belongs to the neurotoxin 07 (Beta/delta-agtx) family. 02 (aga-3) subfamily. Expressed by the venom gland.

Its subcellular location is the secreted. Its function is as follows. Insecticidal neurotoxin that induces irreversible neuromuscular blockade in house crickets (A.domesticus). Modifies presynaptic voltage-gated sodium channels (Nav), causing them to open at the normal resting potential of the nerve. This leads to spontaneous release of neurotransmitter and repetitive action potentials in motor neurons. This chain is Mu-agatoxin-Hc1b, found in Hololena curta (Funnel-web spider).